The sequence spans 622 residues: Probable potassium transport system protein Kup (622 aa).

12 consecutive transmembrane segments (helical) span residues 9 to 29, 52 to 72, 101 to 121, 137 to 157, 169 to 189, 213 to 233, 247 to 267, 287 to 309, 337 to 357, 363 to 383, 396 to 416, and 419 to 439; these read LPAV…TSPL, FLSL…LAFV, VLLV…VITP, PALT…LFVI, FGPV…ISIF, VAFF…ALYA, WFTV…ALIL, FPMV…SGVF, IYIP…VVTF, LAAA…ILAC, VVKI…LANV, and FFAG…VMAT.

This sequence belongs to the HAK/KUP transporter (TC 2.A.72) family.

The protein localises to the cell inner membrane. It carries out the reaction K(+)(in) + H(+)(in) = K(+)(out) + H(+)(out). In terms of biological role, transport of potassium into the cell. Likely operates as a K(+):H(+) symporter. In Tolumonas auensis (strain DSM 9187 / NBRC 110442 / TA 4), this protein is Probable potassium transport system protein Kup.